The chain runs to 514 residues: Na(+)/H(+) antiporter NhaB (514 aa).

Transmembrane regions (helical) follow at residues 23 to 43 (LALLVFLIINPLTFFTNSFVA), 52 to 72 (IFTLAMALKCYPLLPGGLLAI), 97 to 117 (LLLMFMVAGIYFMKQLLLFIF), 120 to 140 (LLLSIRSKMVLSLAFCVAAAF), 144 to 164 (FLDALTVVAVVISVAVGFYGI), 202 to 222 (LMMHAGVGTALGGVMTMVGEP), 238 to 258 (FFLRMSPVTVPVLVCGLLTCM), 303 to 323 (AIIGVWLVTALALHLAEVGLI), 357 to 377 (LTVFFSIVAVIIDQHLFAPII), 391 to 411 (LFYLFNGLLSSISDNVFVGTI), 447 to 467 (ATPNGQAAFLFLLTSALAPLI), and 475 to 495 (VWMALPYTIILTLVGLLCVEF).

This sequence belongs to the NhaB Na(+)/H(+) (TC 2.A.34) antiporter family.

The protein localises to the cell inner membrane. The enzyme catalyses 2 Na(+)(in) + 3 H(+)(out) = 2 Na(+)(out) + 3 H(+)(in). In terms of biological role, na(+)/H(+) antiporter that extrudes sodium in exchange for external protons. The sequence is that of Na(+)/H(+) antiporter NhaB from Salmonella arizonae (strain ATCC BAA-731 / CDC346-86 / RSK2980).